A 60-amino-acid chain; its full sequence is UPF0434 protein NMA0874 (60 aa).

The protein belongs to the UPF0434 family.

The polypeptide is UPF0434 protein NMA0874 (Neisseria meningitidis serogroup A / serotype 4A (strain DSM 15465 / Z2491)).